Reading from the N-terminus, the 1399-residue chain is DNA-directed RNA polymerase subunit beta' (1399 aa).

Zn(2+)-binding residues include Cys-70, Cys-72, Cys-85, and Cys-88. Mg(2+) contacts are provided by Asp-460, Asp-462, and Asp-464. Cys-814, Cys-888, Cys-895, and Cys-898 together coordinate Zn(2+).

The protein belongs to the RNA polymerase beta' chain family. In terms of assembly, the RNAP catalytic core consists of 2 alpha, 1 beta, 1 beta' and 1 omega subunit. When a sigma factor is associated with the core the holoenzyme is formed, which can initiate transcription. The cofactor is Mg(2+). Zn(2+) serves as cofactor.

It catalyses the reaction RNA(n) + a ribonucleoside 5'-triphosphate = RNA(n+1) + diphosphate. DNA-dependent RNA polymerase catalyzes the transcription of DNA into RNA using the four ribonucleoside triphosphates as substrates. The protein is DNA-directed RNA polymerase subunit beta' of Pseudomonas putida (strain GB-1).